Here is an 841-residue protein sequence, read N- to C-terminus: Protein translocase subunit SecA (841 aa).

Residues Gln-87, 105–109, and Asp-494 contribute to the ATP site; that span reads GEGKT. Residues Cys-825, Cys-827, Cys-836, and Cys-837 each coordinate Zn(2+).

Belongs to the SecA family. In terms of assembly, monomer and homodimer. Part of the essential Sec protein translocation apparatus which comprises SecA, SecYEG and auxiliary proteins SecDF-YajC and YidC. Requires Zn(2+) as cofactor.

It is found in the cell inner membrane. The protein resides in the cytoplasm. It catalyses the reaction ATP + H2O + cellular proteinSide 1 = ADP + phosphate + cellular proteinSide 2.. Its function is as follows. Part of the Sec protein translocase complex. Interacts with the SecYEG preprotein conducting channel. Has a central role in coupling the hydrolysis of ATP to the transfer of proteins into and across the cell membrane, serving as an ATP-driven molecular motor driving the stepwise translocation of polypeptide chains across the membrane. The chain is Protein translocase subunit SecA from Syntrophus aciditrophicus (strain SB).